The following is a 700-amino-acid chain: Long-chain-fatty-acid--CoA ligase 1 (700 aa).

Residues 1 to 21 are disordered; that stretch reads MVAQYTVPVGKAANEHETAPR. Lys-189 participates in a covalent cross-link: Glycyl lysine isopeptide (Lys-Gly) (interchain with G-Cter in ubiquitin). Residue 269-280 coordinates ATP; it reads YTSGSTGEPKGV. The FACS motif lies at 531 to 580; the sequence is DGWFKTGDIGEWEANGHLKIIDRKKNLVKTMNGEYIALEKLESVYRSNEY.

It belongs to the ATP-dependent AMP-binding enzyme family. As to quaternary structure, interacts with FAT1. The cofactor is Mg(2+).

It is found in the lipid droplet. The protein localises to the cell membrane. It carries out the reaction a long-chain fatty acid + ATP + CoA = a long-chain fatty acyl-CoA + AMP + diphosphate. The enzyme catalyses (9Z)-octadecenoate + ATP + CoA = (9Z)-octadecenoyl-CoA + AMP + diphosphate. The catalysed reaction is hexadecanoate + ATP + CoA = hexadecanoyl-CoA + AMP + diphosphate. It catalyses the reaction (9Z)-hexadecenoate + ATP + CoA = (9Z)-hexadecenoyl-CoA + AMP + diphosphate. It carries out the reaction tetradecanoate + ATP + CoA = tetradecanoyl-CoA + AMP + diphosphate. The enzyme catalyses (9Z)-tetradecenoate + ATP + CoA = (9Z)-tetradecenoyl-CoA + AMP + diphosphate. The catalysed reaction is (9Z,12Z)-octadecadienoate + ATP + CoA = (9Z,12Z)-octadecadienoyl-CoA + AMP + diphosphate. It catalyses the reaction dodecanoate + ATP + CoA = dodecanoyl-CoA + AMP + diphosphate. It carries out the reaction pentadecanoate + ATP + CoA = pentadecanoyl-CoA + AMP + diphosphate. The enzyme catalyses undecanoate + ATP + CoA = undecanoyl-CoA + AMP + diphosphate. The catalysed reaction is heptadecanoate + ATP + CoA = heptadecanoyl-CoA + AMP + diphosphate. It catalyses the reaction octadecanoate + ATP + CoA = octadecanoyl-CoA + AMP + diphosphate. Its function is as follows. Activates long-chain fatty acids (LCFA) by esterification of the fatty acids into metabolically active CoA-thioesters for subsequent degradation or incorporation into phospholipids. Also facilitates the transport of LCFAs into the cell, either by active transport or by decreasing the intracellular LCFA concentration. It may supplement intracellular myristoyl-CoA pools from exogenous myristate. Preferentially acts on C12:0-C16:0 fatty acids with myristic and pentadecanic acid (C15:0) having the highest activities. Also involved in long-chain base (LCB) uptake of sphingolipids. In contrast ot LCFA uptake, LCB uptake does not require ATP, suggesting that the enzyme is directly involved in active LCB uptake. Involved in the sphingolipid-to-glycerolipid metabolic pathway, converting the sphingolipid metabolite hexadecenoic acid to hexadecenoyl-CoA, which is then further converted to glycerolipids. In Saccharomyces cerevisiae (strain ATCC 204508 / S288c) (Baker's yeast), this protein is Long-chain-fatty-acid--CoA ligase 1 (FAA1).